We begin with the raw amino-acid sequence, 213 residues long: Peptidyl-tRNA hydrolase (213 aa).

A tRNA-binding site is contributed by tyrosine 15. The active-site Proton acceptor is histidine 20. Positions 66, 68, and 114 each coordinate tRNA. The disordered stretch occupies residues 187 to 213 (HTTKPPRPKPPRPAAAPVDAPAAPGDQ). Residues 201 to 213 (AAPVDAPAAPGDQ) show a composition bias toward low complexity.

This sequence belongs to the PTH family. In terms of assembly, monomer.

The protein resides in the cytoplasm. The enzyme catalyses an N-acyl-L-alpha-aminoacyl-tRNA + H2O = an N-acyl-L-amino acid + a tRNA + H(+). Its function is as follows. Hydrolyzes ribosome-free peptidyl-tRNAs (with 1 or more amino acids incorporated), which drop off the ribosome during protein synthesis, or as a result of ribosome stalling. Catalyzes the release of premature peptidyl moieties from peptidyl-tRNA molecules trapped in stalled 50S ribosomal subunits, and thus maintains levels of free tRNAs and 50S ribosomes. In Paracidovorax citrulli (strain AAC00-1) (Acidovorax citrulli), this protein is Peptidyl-tRNA hydrolase.